The primary structure comprises 237 residues: Ribosomal RNA small subunit methyltransferase G (237 aa).

S-adenosyl-L-methionine contacts are provided by residues glycine 78, phenylalanine 83, 129-130 (AE), and arginine 148.

It belongs to the methyltransferase superfamily. RNA methyltransferase RsmG family.

It is found in the cytoplasm. Functionally, specifically methylates the N7 position of a guanine in 16S rRNA. This is Ribosomal RNA small subunit methyltransferase G from Streptococcus equi subsp. equi (strain 4047).